The sequence spans 74 residues: RNA-binding protein Hfq (74 aa).

The Sm domain occupies 9 to 69 (DQFLNQLRKE…ISTFMPQKNV (61 aa)).

This sequence belongs to the Hfq family. Homohexamer.

RNA chaperone that binds small regulatory RNA (sRNAs) and mRNAs to facilitate mRNA translational regulation in response to envelope stress, environmental stress and changes in metabolite concentrations. Also binds with high specificity to tRNAs. In Bacillus cytotoxicus (strain DSM 22905 / CIP 110041 / 391-98 / NVH 391-98), this protein is RNA-binding protein Hfq.